We begin with the raw amino-acid sequence, 445 residues long: Cyclic GMP-AMP phosphodiesterase SMPDL3A (445 aa).

An N-terminal signal peptide occupies residues 1–22 (MALPGNFLCCLLVAWLCDPGLG). Asp-42 and His-44 together coordinate Zn(2+). Residues Cys-59 and Cys-78 are joined by a disulfide bond. Residue Asn-66 is glycosylated (N-linked (GlcNAc...) asparagine). Residue Asp-107 participates in Zn(2+) binding. An ATP-binding site is contributed by His-111. An N-linked (GlcNAc...) asparagine glycan is attached at Asn-128. A Zn(2+)-binding site is contributed by Asn-148. Asn-148 and His-149 together coordinate ATP. N-linked (GlcNAc...) asparagine glycosylation is found at Asn-219 and Asn-235. Zn(2+) is bound by residues His-249, His-290, and His-292. Residues Asn-353 and Asn-364 are each glycosylated (N-linked (GlcNAc...) asparagine). 2 cysteine pairs are disulfide-bonded: Cys-417-Cys-421 and Cys-427-Cys-440.

Belongs to the acid sphingomyelinase family. As to quaternary structure, monomer. Homodimer; homodimerizes following 2',3'-cGAMP-binding. Requires Zn(2+) as cofactor.

The protein localises to the secreted. It carries out the reaction 2',3'-cGAMP + H2O = 5'-pGpA(2'-5') + H(+). It catalyses the reaction 5'-pGpA(2'-5') + H2O = 5'-GpA(2'-5') + phosphate. The enzyme catalyses a ribonucleoside 5'-triphosphate + H2O = a ribonucleoside 5'-diphosphate + phosphate + H(+). The catalysed reaction is ATP + H2O = ADP + phosphate + H(+). Functionally, cyclic-nucleotide phosphodiesterase that acts as a negative regulator of innate immunity by mediating degradation of 2',3'-cGAMP, thereby inhibiting the cGAS-STING signaling. Specifically linearizes 2',3'-cGAMP into 2'5'-bond pGpA and further hydrolyzes pGpA to produce GpA. Also has in vitro nucleotide phosphodiesterase activity with nucleoside triphosphates, such as ATP. Has in vitro activity with p-nitrophenyl-TMP. Has lower activity with nucleoside diphosphates, and no activity with nucleoside monophosphates. Has in vitro activity with CDP-choline, giving rise to CMP and phosphocholine. Has in vitro activity with CDP-ethanolamine. Does not have sphingomyelin phosphodiesterase activity. This is Cyclic GMP-AMP phosphodiesterase SMPDL3A (Smpdl3a) from Rattus norvegicus (Rat).